The chain runs to 108 residues: UPF0060 membrane protein Spro_2289 (108 aa).

The next 4 membrane-spanning stretches (helical) occupy residues 6 to 26, 31 to 51, 61 to 81, and 85 to 105; these read LLFF…YLWL, SAWL…LLTL, AAYG…VDGV, and ALDW…VSGW.

This sequence belongs to the UPF0060 family.

It is found in the cell inner membrane. This chain is UPF0060 membrane protein Spro_2289, found in Serratia proteamaculans (strain 568).